The sequence spans 270 residues: tRNA pseudouridine synthase A (270 aa).

Asp60 functions as the Nucleophile in the catalytic mechanism. An RNA binding region spans residues 107 to 111 (FHARF). Tyr118 contributes to the substrate binding site. Positions 168-172 (QCQSR) are interaction with tRNA.

It belongs to the tRNA pseudouridine synthase TruA family. As to quaternary structure, homodimer.

It catalyses the reaction uridine(38/39/40) in tRNA = pseudouridine(38/39/40) in tRNA. Functionally, formation of pseudouridine at positions 38, 39 and 40 in the anticodon stem and loop of transfer RNAs. In Escherichia coli O9:H4 (strain HS), this protein is tRNA pseudouridine synthase A.